The sequence spans 156 residues: Transcriptional regulator MraZ (156 aa).

2 consecutive SpoVT-AbrB domains span residues 5-51 (TFEK…GKAL) and 80-123 (MAKL…SREA).

This sequence belongs to the MraZ family. As to quaternary structure, forms oligomers.

The protein resides in the cytoplasm. It is found in the nucleoid. This Caulobacter vibrioides (strain ATCC 19089 / CIP 103742 / CB 15) (Caulobacter crescentus) protein is Transcriptional regulator MraZ.